A 286-amino-acid polypeptide reads, in one-letter code: uncharacterized protein (286 aa).

The segment at residues 1-31 (MKKMSRRQFLKGMFGALAAGALTAGGGYGYA) is a signal peptide (tat-type signal). 6 residues coordinate a divalent metal cation: aspartate 65, histidine 67, aspartate 97, asparagine 130, histidine 221, and histidine 223.

This sequence belongs to the metallophosphoesterase superfamily. A divalent metal cation is required as a cofactor. Post-translationally, predicted to be exported by the Tat system. The position of the signal peptide cleavage has not been experimentally proven.

This is an uncharacterized protein from Bacillus subtilis (strain 168).